The primary structure comprises 147 residues: Large ribosomal subunit protein uL13 (147 aa).

It belongs to the universal ribosomal protein uL13 family. Part of the 50S ribosomal subunit.

This protein is one of the early assembly proteins of the 50S ribosomal subunit, although it is not seen to bind rRNA by itself. It is important during the early stages of 50S assembly. The chain is Large ribosomal subunit protein uL13 from Rhodococcus jostii (strain RHA1).